Consider the following 192-residue polypeptide: Cytidylate kinase (192 aa).

7–15 lines the ATP pocket; sequence GPPGSGKST.

This sequence belongs to the cytidylate kinase family. Type 2 subfamily.

It localises to the cytoplasm. It catalyses the reaction CMP + ATP = CDP + ADP. It carries out the reaction dCMP + ATP = dCDP + ADP. The protein is Cytidylate kinase of Halobacterium salinarum (strain ATCC 29341 / DSM 671 / R1).